The chain runs to 105 residues: uncharacterized protein (105 aa).

This is an uncharacterized protein from Rickettsia conorii (strain ATCC VR-613 / Malish 7).